The primary structure comprises 596 residues: ATP-dependent lipid A-core flippase (596 aa).

The next 6 membrane-spanning stretches (helical) occupy residues 34–54 (VWVL…EAGI), 80–100 (AAVV…GYLL), 138–158 (AVVF…ITLV), 164–184 (VVFL…IVAI), 263–283 (QPLT…IAVV), and 292–312 (VGGF…LKHL). Positions 38-321 (VAGVLAMAAV…LMDVNQPLQR (284 aa)) constitute an ABC transmembrane type-1 domain. In terms of domain architecture, ABC transporter spans 353 to 589 (IEFSHVSFSY…GGLYAHLHRI (237 aa)). 389 to 396 (GPSGSGKT) contacts ATP.

The protein belongs to the ABC transporter superfamily. Lipid exporter (TC 3.A.1.106) family. As to quaternary structure, homodimer.

The protein localises to the cell inner membrane. It carries out the reaction ATP + H2O + lipid A-core oligosaccharideSide 1 = ADP + phosphate + lipid A-core oligosaccharideSide 2.. In terms of biological role, involved in lipopolysaccharide (LPS) biosynthesis. Translocates lipid A-core from the inner to the outer leaflet of the inner membrane. Transmembrane domains (TMD) form a pore in the inner membrane and the ATP-binding domain (NBD) is responsible for energy generation. The chain is ATP-dependent lipid A-core flippase from Burkholderia mallei (strain ATCC 23344).